A 156-amino-acid polypeptide reads, in one-letter code: Probable chemoreceptor glutamine deamidase CheD (156 aa).

This sequence belongs to the CheD family.

It catalyses the reaction L-glutaminyl-[protein] + H2O = L-glutamyl-[protein] + NH4(+). Its function is as follows. Probably deamidates glutamine residues to glutamate on methyl-accepting chemotaxis receptors (MCPs), playing an important role in chemotaxis. This Bdellovibrio bacteriovorus (strain ATCC 15356 / DSM 50701 / NCIMB 9529 / HD100) protein is Probable chemoreceptor glutamine deamidase CheD.